The chain runs to 176 residues: Ribosome maturation factor RimM (176 aa).

The 74-residue stretch at 92–165 (EDEFLYSDLI…RLVVVPPVYA (74 aa)) folds into the PRC barrel domain.

This sequence belongs to the RimM family. As to quaternary structure, binds ribosomal protein uS19.

The protein localises to the cytoplasm. An accessory protein needed during the final step in the assembly of 30S ribosomal subunit, possibly for assembly of the head region. Essential for efficient processing of 16S rRNA. May be needed both before and after RbfA during the maturation of 16S rRNA. It has affinity for free ribosomal 30S subunits but not for 70S ribosomes. This chain is Ribosome maturation factor RimM, found in Paramagnetospirillum magneticum (strain ATCC 700264 / AMB-1) (Magnetospirillum magneticum).